Consider the following 124-residue polypeptide: Fluoride-specific ion channel FluC (124 aa).

4 consecutive transmembrane segments (helical) span residues 1–21 (MAYL…HFIN), 36–56 (TFFI…YLAF), 66–86 (LFLM…SLDA), and 94–114 (AVGL…AGLF). Na(+) contacts are provided by G74 and T77.

It belongs to the fluoride channel Fluc/FEX (TC 1.A.43) family.

The protein resides in the cell inner membrane. It carries out the reaction fluoride(in) = fluoride(out). With respect to regulation, na(+) is not transported, but it plays an essential structural role and its presence is essential for fluoride channel function. In terms of biological role, fluoride-specific ion channel. Important for reducing fluoride concentration in the cell, thus reducing its toxicity. The chain is Fluoride-specific ion channel FluC from Rhodopseudomonas palustris (strain ATCC BAA-98 / CGA009).